We begin with the raw amino-acid sequence, 207 residues long: LexA repressor (207 aa).

Residues 28-48 constitute a DNA-binding region (H-T-H motif); the sequence is RAEISRELGFKSANAAEEHLK. Catalysis depends on for autocatalytic cleavage activity residues Ser-123 and Lys-160.

The protein belongs to the peptidase S24 family. In terms of assembly, homodimer.

It carries out the reaction Hydrolysis of Ala-|-Gly bond in repressor LexA.. Represses a number of genes involved in the response to DNA damage (SOS response), including recA and lexA. In the presence of single-stranded DNA, RecA interacts with LexA causing an autocatalytic cleavage which disrupts the DNA-binding part of LexA, leading to derepression of the SOS regulon and eventually DNA repair. This chain is LexA repressor, found in Haemophilus influenzae (strain ATCC 51907 / DSM 11121 / KW20 / Rd).